Reading from the N-terminus, the 274-residue chain is Diaminopimelate epimerase (274 aa).

Positions 11, 44, and 64 each coordinate substrate. Cys73 serves as the catalytic Proton donor. Substrate-binding positions include 74–75 (GN), Asn157, Asn190, and 208–209 (ER). Catalysis depends on Cys217, which acts as the Proton acceptor. A substrate-binding site is contributed by 218-219 (GS).

It belongs to the diaminopimelate epimerase family. In terms of assembly, homodimer.

It is found in the cytoplasm. It carries out the reaction (2S,6S)-2,6-diaminopimelate = meso-2,6-diaminopimelate. Its pathway is amino-acid biosynthesis; L-lysine biosynthesis via DAP pathway; DL-2,6-diaminopimelate from LL-2,6-diaminopimelate: step 1/1. Catalyzes the stereoinversion of LL-2,6-diaminopimelate (L,L-DAP) to meso-diaminopimelate (meso-DAP), a precursor of L-lysine and an essential component of the bacterial peptidoglycan. In Actinobacillus succinogenes (strain ATCC 55618 / DSM 22257 / CCUG 43843 / 130Z), this protein is Diaminopimelate epimerase.